Consider the following 321-residue polypeptide: Putative glucan endo-1,3-beta-glucosidase GVI (321 aa).

The signal sequence occupies residues 1–6; it reads LAGVEG. Glutamate 100 acts as the Proton donor in catalysis. The active-site Nucleophile is glutamate 241.

It belongs to the glycosyl hydrolase 17 family.

The catalysed reaction is Hydrolysis of (1-&gt;3)-beta-D-glucosidic linkages in (1-&gt;3)-beta-D-glucans.. In terms of biological role, may provide a degree of protection against microbial invasion of germinated barley grain through its ability to degrade fungal cell wall polysaccharides. The sequence is that of Putative glucan endo-1,3-beta-glucosidase GVI from Hordeum vulgare (Barley).